We begin with the raw amino-acid sequence, 304 residues long: Glutaminase (304 aa).

Positions 63, 114, 158, 165, 189, 240, and 258 each coordinate substrate.

Belongs to the glutaminase family. In terms of assembly, homotetramer.

The enzyme catalyses L-glutamine + H2O = L-glutamate + NH4(+). This chain is Glutaminase, found in Shewanella baltica (strain OS223).